The sequence spans 510 residues: Gallate 1-beta-glucosyltransferase (510 aa).

The Proton acceptor role is filled by His-19. Residue His-19 participates in an anthocyanidin binding. The UDP-alpha-D-glucose site is built by Gln-343, His-358, Trp-361, Asn-362, Ser-363, and Glu-366. Gly-381 lines the an anthocyanidin pocket. Positions 382 and 383 each coordinate UDP-alpha-D-glucose.

Belongs to the UDP-glycosyltransferase family. Expressed in swelling buds and young leaves.

It catalyses the reaction 3,4,5-trihydroxybenzoate + UDP-alpha-D-glucose = 1-O-galloyl-beta-D-glucose + UDP. The enzyme catalyses vanillate + UDP-alpha-D-glucose = 1-O-(4-hydroxy-3-methoxybenzoyl)-beta-D-glucose + UDP. The catalysed reaction is 3,4-dihydroxybenzoate + UDP-alpha-D-glucose = 1-O-(3,4-dihydroxy-benzoyl)-beta-D-glucose + UDP. Its function is as follows. Glucosyltransferase that catalyzes the formation of 1-O-beta-D-glucose esters with hydroxybenzoic acids as preferred glucosyl acceptors. Has the highest activity with 3,4-dihydroxybenzoate, vanillate and gallate in vitro. Gallate is the predicted native substrate of the enzyme, which thus catalyzes the formation of 1-O-galloyl-beta-D-glucose, the first committed step of gallotannin biosynthesis. The protein is Gallate 1-beta-glucosyltransferase of Quercus robur (English oak).